The primary structure comprises 852 residues: Alanine--tRNA ligase (852 aa).

Positions 554, 558, 656, and 660 each coordinate Zn(2+).

Belongs to the class-II aminoacyl-tRNA synthetase family. Zn(2+) is required as a cofactor.

It is found in the cytoplasm. The enzyme catalyses tRNA(Ala) + L-alanine + ATP = L-alanyl-tRNA(Ala) + AMP + diphosphate. In terms of biological role, catalyzes the attachment of alanine to tRNA(Ala) in a two-step reaction: alanine is first activated by ATP to form Ala-AMP and then transferred to the acceptor end of tRNA(Ala). Also edits incorrectly charged Ser-tRNA(Ala) and Gly-tRNA(Ala) via its editing domain. The sequence is that of Alanine--tRNA ligase from Campylobacter curvus (strain 525.92).